Reading from the N-terminus, the 321-residue chain is Anthranilate phosphoribosyltransferase (321 aa).

5-phospho-alpha-D-ribose 1-diphosphate-binding positions include Gly72, Gly75–Asp76, Thr80, Asn82–Thr85, Lys99–Ser107, and Ser111. Gly72 is an anthranilate binding site. Ser84 contributes to the Mg(2+) binding site. Asn102 is a binding site for anthranilate. Residue Arg157 coordinates anthranilate. Mg(2+) is bound by residues Asp216 and Glu217.

Belongs to the anthranilate phosphoribosyltransferase family. As to quaternary structure, homodimer. It depends on Mg(2+) as a cofactor.

It catalyses the reaction N-(5-phospho-beta-D-ribosyl)anthranilate + diphosphate = 5-phospho-alpha-D-ribose 1-diphosphate + anthranilate. It participates in amino-acid biosynthesis; L-tryptophan biosynthesis; L-tryptophan from chorismate: step 2/5. Functionally, catalyzes the transfer of the phosphoribosyl group of 5-phosphorylribose-1-pyrophosphate (PRPP) to anthranilate to yield N-(5'-phosphoribosyl)-anthranilate (PRA). In Methanococcus maripaludis (strain C6 / ATCC BAA-1332), this protein is Anthranilate phosphoribosyltransferase.